The primary structure comprises 339 residues: tRNA pseudouridine synthase D (339 aa).

The active-site Nucleophile is Asp-80. Positions 155–311 (GFPNYFTEQR…AKGFSWAFEL (157 aa)) constitute a TRUD domain.

Belongs to the pseudouridine synthase TruD family.

It carries out the reaction uridine(13) in tRNA = pseudouridine(13) in tRNA. In terms of biological role, responsible for synthesis of pseudouridine from uracil-13 in transfer RNAs. The polypeptide is tRNA pseudouridine synthase D (Haemophilus influenzae (strain PittEE)).